Here is a 32-residue protein sequence, read N- to C-terminus: Alpha-2-macroglobulin homolog (32 aa).

The isoglutamyl cysteine thioester (Cys-Gln) cross-link spans 16-19; that stretch reads CGEQ.

This sequence belongs to the protease inhibitor I39 (alpha-2-macroglobulin) family. As to quaternary structure, homodimer; disulfide-linked.

Its subcellular location is the secreted. In terms of biological role, is able to inhibit all four classes of proteinases by a unique 'trapping' mechanism. This protein has a peptide stretch, called the 'bait region' which contains specific cleavage sites for different proteinases. When a proteinase cleaves the bait region, a conformational change is induced in the protein which traps the proteinase. The entrapped enzyme remains active against low molecular weight substrates (activity against high molecular weight substrates is greatly reduced). Following cleavage in the bait region a thioester bond is hydrolyzed and mediates the covalent binding of the protein to the proteinase. The chain is Alpha-2-macroglobulin homolog from Pacifastacus leniusculus (Signal crayfish).